The following is a 388-amino-acid chain: Galactokinase (388 aa).

33–36 contributes to the substrate binding site; the sequence is EHTD. Residues Ser67 and 124-130 contribute to the ATP site; that span reads GAGLSSS. Residues Ser130 and Glu162 each contribute to the Mg(2+) site. Residue Asp174 is the Proton acceptor of the active site. Tyr224 is a binding site for substrate.

It belongs to the GHMP kinase family. GalK subfamily.

It is found in the cytoplasm. The catalysed reaction is alpha-D-galactose + ATP = alpha-D-galactose 1-phosphate + ADP + H(+). Its pathway is carbohydrate metabolism; galactose metabolism. Functionally, catalyzes the transfer of the gamma-phosphate of ATP to D-galactose to form alpha-D-galactose-1-phosphate (Gal-1-P). The chain is Galactokinase from Lacticaseibacillus paracasei (strain ATCC 334 / BCRC 17002 / CCUG 31169 / CIP 107868 / KCTC 3260 / NRRL B-441) (Lactobacillus paracasei).